Reading from the N-terminus, the 368-residue chain is MIALIIGILTSLIITLVGTPLLIRIVHKLNYGQYIRQDGPKSHQVKRGTPTLGGVVIVLAVVLGWCASALYRFCTTGARPTWAAILALFAMVSMGVLGFIDDFAKVRKKQNEGLTVGGKFFGQVVFATIFAVLALIVPTRSGFPVAQAGMSFIEKPFLSFEFAGRIVAIILFVIWVNFLMAAWTNAVNLSDGLDGLCAGSSMIAFVGYAIIAMWQMYHLKGQAHSGFTYAVSDPLDLGIIACCAAVACLGFLWYNCNPASIFMGDTGSLALGGLFAALSIITHTEFLAMIIGGLFVVETLSDVIQVGYFKATHKRVFKMAPIHHHFELCGWSESKVVVRFWIVELMFVITGLIIFYGNWVGLSGLWHH.

The next 10 helical transmembrane spans lie at 2–22 (IALI…TPLL), 51–71 (TLGG…SALY), 80–100 (PTWA…LGFI), 116–136 (VGGK…LALI), 166–186 (IVAI…WTNA), 193–213 (LDGL…IIAM), 234–254 (PLDL…FLWY), 256–276 (CNPA…GLFA), 277–297 (ALSI…LFVV), and 340–360 (FWIV…GNWV).

Belongs to the glycosyltransferase 4 family. MraY subfamily. Mg(2+) is required as a cofactor.

It is found in the cell membrane. It carries out the reaction UDP-N-acetyl-alpha-D-muramoyl-L-alanyl-gamma-D-glutamyl-meso-2,6-diaminopimeloyl-D-alanyl-D-alanine + di-trans,octa-cis-undecaprenyl phosphate = di-trans,octa-cis-undecaprenyl diphospho-N-acetyl-alpha-D-muramoyl-L-alanyl-D-glutamyl-meso-2,6-diaminopimeloyl-D-alanyl-D-alanine + UMP. The protein operates within cell wall biogenesis; peptidoglycan biosynthesis. Functionally, catalyzes the initial step of the lipid cycle reactions in the biosynthesis of the cell wall peptidoglycan: transfers peptidoglycan precursor phospho-MurNAc-pentapeptide from UDP-MurNAc-pentapeptide onto the lipid carrier undecaprenyl phosphate, yielding undecaprenyl-pyrophosphoryl-MurNAc-pentapeptide, known as lipid I. The sequence is that of Phospho-N-acetylmuramoyl-pentapeptide-transferase from Bifidobacterium animalis subsp. lactis (strain AD011).